A 204-amino-acid chain; its full sequence is Holliday junction branch migration complex subunit RuvA (204 aa).

The tract at residues methionine 1–methionine 64 is domain I. The interval threonine 65–alanine 143 is domain II. A flexible linker region spans residues leucine 144 to glycine 151. The interval valine 152–arginine 204 is domain III.

This sequence belongs to the RuvA family. As to quaternary structure, homotetramer. Forms an RuvA(8)-RuvB(12)-Holliday junction (HJ) complex. HJ DNA is sandwiched between 2 RuvA tetramers; dsDNA enters through RuvA and exits via RuvB. An RuvB hexamer assembles on each DNA strand where it exits the tetramer. Each RuvB hexamer is contacted by two RuvA subunits (via domain III) on 2 adjacent RuvB subunits; this complex drives branch migration. In the full resolvosome a probable DNA-RuvA(4)-RuvB(12)-RuvC(2) complex forms which resolves the HJ.

The protein resides in the cytoplasm. Its function is as follows. The RuvA-RuvB-RuvC complex processes Holliday junction (HJ) DNA during genetic recombination and DNA repair, while the RuvA-RuvB complex plays an important role in the rescue of blocked DNA replication forks via replication fork reversal (RFR). RuvA specifically binds to HJ cruciform DNA, conferring on it an open structure. The RuvB hexamer acts as an ATP-dependent pump, pulling dsDNA into and through the RuvAB complex. HJ branch migration allows RuvC to scan DNA until it finds its consensus sequence, where it cleaves and resolves the cruciform DNA. In Rhizobium etli (strain ATCC 51251 / DSM 11541 / JCM 21823 / NBRC 15573 / CFN 42), this protein is Holliday junction branch migration complex subunit RuvA.